The following is a 407-amino-acid chain: Proteasome-activating nucleotidase (407 aa).

Positions 22-67 form a coiled coil; the sequence is KEKTQIAELESKVLRLELKNKDINRENVQIKKENEILKRELDKLRI. Residues 192-197 and H331 each bind ATP; that span reads GTGKTL. Residues 405–407 form a docks into pockets in the proteasome alpha-ring to cause gate opening region; sequence MYG.

This sequence belongs to the AAA ATPase family. Homohexamer. The hexameric complex has a two-ring architecture resembling a top hat that caps the 20S proteasome core at one or both ends. Upon ATP-binding, the C-terminus of PAN interacts with the alpha-rings of the proteasome core by binding to the intersubunit pockets.

The protein resides in the cytoplasm. Its function is as follows. ATPase which is responsible for recognizing, binding, unfolding and translocation of substrate proteins into the archaeal 20S proteasome core particle. Is essential for opening the gate of the 20S proteasome via an interaction with its C-terminus, thereby allowing substrate entry and access to the site of proteolysis. Thus, the C-termini of the proteasomal ATPase function like a 'key in a lock' to induce gate opening and therefore regulate proteolysis. Unfolding activity requires energy from ATP hydrolysis, whereas ATP binding alone promotes ATPase-20S proteasome association which triggers gate opening, and supports translocation of unfolded substrates. This Methanococcus maripaludis (strain DSM 14266 / JCM 13030 / NBRC 101832 / S2 / LL) protein is Proteasome-activating nucleotidase.